Here is an 841-residue protein sequence, read N- to C-terminus: GRIP1-associated protein 1 (841 aa).

Alanine 2 is modified (N-acetylalanine). 2 coiled-coil regions span residues 4–161 and 208–641; these read ALSE…YGKE and EQLQ…NSKS. 2 disordered regions span residues 532–551 and 558–580; these read AEES…KQCR and LKGK…EERD. Phosphoserine is present on residues serine 655, serine 666, serine 668, serine 669, serine 688, serine 690, serine 691, and serine 692. Residues 681 to 706 form a disordered region; that stretch reads SSAVPARSLSSSPQAQPPRPAELSDE. Low complexity predominate over residues 682 to 694; that stretch reads SAVPARSLSSSPQ. Coiled-coil stretches lie at residues 701–735 and 785–814; these read AELS…LEVS and DENL…KDME.

Interacts with GRIP1, GRIP2 and AMPA receptors. Interacts (via C-terminus) with MAPK8/JNK1 and MAP3K1/MEKK1; the interaction promotes MAP3K1-mediated phosphorylation of MAPK8. Interacts (via N-terminus) with RAB4A (in GTP-bound form). Interacts (via C-terminus) with STX12. In terms of processing, proteolytically cleaved by caspase-3. A minor C-terminal proteolytic fragment of 30 kDa is produced. Proteolytic cleavage is required for JNK signaling activation.

The protein resides in the early endosome membrane. It localises to the recycling endosome membrane. Its subcellular location is the cell projection. The protein localises to the axon. It is found in the dendrite. The protein resides in the synapse. Regulates the endosomal recycling back to the neuronal plasma membrane, possibly by connecting early and late recycling endosomal domains and promoting segregation of recycling endosomes from early endosomal membranes. Involved in the localization of recycling endosomes to dendritic spines, thereby playing a role in the maintenance of dendritic spine morphology. Required for the activity-induced AMPA receptor recycling to dendrite membranes and for long-term potentiation and synaptic plasticity. Functionally, functions as a scaffold protein to facilitate MAP3K1/MEKK1-mediated activation of the JNK1 kinase by phosphorylation, possibly by bringing MAP3K1/MEKK1 and JNK1 in close proximity. The sequence is that of GRIP1-associated protein 1 from Homo sapiens (Human).